A 166-amino-acid polypeptide reads, in one-letter code: Ribonuclease H (166 aa).

One can recognise an RNase H type-1 domain in the interval lysine 10–serine 151. Mg(2+)-binding residues include aspartate 19, glutamate 57, aspartate 79, and aspartate 143. Residues leucine 145–lysine 157 are compositionally biased toward basic and acidic residues. Residues leucine 145 to leucine 166 form a disordered region.

The protein belongs to the RNase H family. In terms of assembly, monomer. The cofactor is Mg(2+).

It is found in the cytoplasm. It catalyses the reaction Endonucleolytic cleavage to 5'-phosphomonoester.. Its function is as follows. Endonuclease that specifically degrades the RNA of RNA-DNA hybrids. This chain is Ribonuclease H, found in Rhodospirillum rubrum (strain ATCC 11170 / ATH 1.1.1 / DSM 467 / LMG 4362 / NCIMB 8255 / S1).